The following is a 307-amino-acid chain: Mitochondrial brown fat uncoupling protein 1 (307 aa).

Over 1–10 (MVSLTTSEVH) the chain is Mitochondrial intermembrane. The chain crosses the membrane as a helical span at residues 11–32 (PTMGVKTFSAGISACLADIITF). Solcar repeat units follow at residues 11–102 (PTMG…VQEY), 111–201 (PTLG…MKGA), and 210–295 (DDVP…LKKE). At 33–73 (PLDTAKVRLQIQGEGQTSSTIRYKGVLGTITTLAKTEGWPK) the chain is on the mitochondrial matrix side. Lys56 contributes to the fatty acid 16:0 binding site. Residues 74 to 96 (LYSGLPAGIQRQISFASLRIGLY) form a helical membrane-spanning segment. Residues 97–116 (DTVQEYFSSGKETPPTLGNR) lie on the Mitochondrial intermembrane side of the membrane. A helical membrane pass occupies residues 117–133 (ISAGLMTGGVAVFIGQP). Residues 134–178 (TEVVKVRLQAQSHLHGIKPRYTGTYNAYRIIATTESFSTLWKGTT) lie on the Mitochondrial matrix side of the membrane. Residues 179-195 (PNLMRNVIINRTELVTY) form a helical membrane-spanning segment. The Mitochondrial intermembrane portion of the chain corresponds to 196-212 (DLMKGALVNNQILADDV). The chain crosses the membrane as a helical span at residues 213 to 232 (PCHLLSALVAGFCTTFLASP). At 233 to 266 (ADVVKTRFINSLPGQYPSVPSCAMTMLTKEGPTA) the chain is on the mitochondrial matrix side. Cys254 is subject to Cysteine sulfenic acid (-SOH). Residues 267–289 (FFKGFVPSFLRLASWNVIMFVCF) traverse the membrane as a helical segment. Residue Lys269 participates in fatty acid 16:0 binding. Residues 290–307 (EQLKKELMKSRQTMDCTT) lie on the Mitochondrial intermembrane side of the membrane.

The protein belongs to the mitochondrial carrier (TC 2.A.29) family. Most probably functions as a monomer. Binds one purine nucleotide per monomer. However, has also been suggested to function as a homodimer or a homotetramer. Tightly associates with cardiolipin in the mitochondrion inner membrane; may stabilize and regulate its activity. In terms of processing, may undergo sulfenylation upon cold exposure. May increase the sensitivity of UCP1 thermogenic function to the activation by noradrenaline probably through structural effects. May undergo ubiquitin-mediated proteasomal degradation.

Its subcellular location is the mitochondrion inner membrane. The catalysed reaction is H(+)(in) = H(+)(out). Has no constitutive proton transporter activity and has to be activated by long-chain fatty acids/LCFAs. Inhibited by purine nucleotides. Both purine nucleotides and LCFAs bind the cytosolic side of the transporter and directly compete to activate or inhibit it. Activated by noradrenaline and reactive oxygen species. Despite lacking canonical translational encoding for selenocysteine, a small pool of the protein has been observed to selectively incorporate selenocysteine at 'Cys-254'. Selenocysteine-modified protein is highly sensitive to redox modification and may constitute a pool of protein highly sensitive to activation by elevated levels of reactive oxygen species (ROS). Mitochondrial protein responsible for thermogenic respiration, a specialized capacity of brown adipose tissue and beige fat that participates in non-shivering adaptive thermogenesis to temperature and diet variations and more generally to the regulation of energy balance. Functions as a long-chain fatty acid/LCFA and proton symporter, simultaneously transporting one LCFA and one proton through the inner mitochondrial membrane. However, LCFAs remaining associated with the transporter via their hydrophobic tails, it results in an apparent transport of protons activated by LCFAs. Thereby, dissipates the mitochondrial proton gradient and converts the energy of substrate oxydation into heat instead of ATP. Regulates the production of reactive oxygen species/ROS by mitochondria. This is Mitochondrial brown fat uncoupling protein 1 from Dicrostonyx groenlandicus (Northern collared lemming).